A 364-amino-acid polypeptide reads, in one-letter code: MGVTGILQLPRDRFKRTSFFLWVIILFQRTFSIPLGVIHNSTLQVSDVDKLVCRDKLSSTNQLRSVGLNLEGNGVATDVPSATKRWGFRSGVPPKVVNYEAGEWAENCYNLEIKKPDGSECLPAAPDGIRGFPRCRYVHKVSGTGPCAGDFAFHKEGAFFLYDRLASTVIYRGTTFAEGVVAFLILPQAKKDFFSSHPLREPVNATEDPSSGYYSTTIRYQATGFGTNETEYLFEVDNLTYVQLESRFTPQFLLQLNETRYTSGKRSNTTGKLIWKVNPEIDTTIGEWAFWETKKTSLEKFAVKSCLSQLYQTEPKTSVVRVRRELLPTQGPTQQLKTTKSWLQKIPLQWFKCTVKEGKLQCRI.

Residues 1 to 32 (MGVTGILQLPRDRFKRTSFFLWVIILFQRTFS) form the signal peptide. An N-linked (GlcNAc...) asparagine; by host glycan is attached at N40. 2 cysteine pairs are disulfide-bonded: C108-C135 and C121-C147. 5 N-linked (GlcNAc...) asparagine; by host glycosylation sites follow: N204, N228, N238, N257, and N268.

This sequence belongs to the filoviruses glycoprotein family. Homodimer; disulfide-linked. The homodimers are linked by two disulfide bonds in a parallel orientation. In terms of assembly, monomer. This precursor is processed into mature sGP and delta-peptide by host furin or furin-like proteases. The cleavage site corresponds to the furin optimal cleavage sequence [KR]-X-[KR]-R. In terms of processing, N-glycosylated. Post-translationally, O-glycosylated.

It is found in the secreted. Functionally, seems to possess an anti-inflammatory activity as it can reverse the barrier-decreasing effects of TNF alpha. Might therefore contribute to the lack of inflammatory reaction seen during infection in spite the of extensive necrosis and massive virus production. Does not seem to be involved in activation of primary macrophages. Does not seem to interact specifically with neutrophils. Viroporin that permeabilizes mammalian cell plasma membranes. It acts by altering permeation of ionic compounds and small molecules. This activity may lead to viral enterotoxic activity. The polypeptide is Pre-small/secreted glycoprotein (GP) (Zaire ebolavirus (strain Gabon-94) (ZEBOV)).